The sequence spans 245 residues: Adenosylcobinamide-GDP ribazoletransferase (245 aa).

Helical transmembrane passes span 31–51, 57–77, 109–129, 134–154, and 176–196; these read LLHY…AALL, PLLQ…ALHL, VAVV…LVVL, PAAL…LFLC, and ALMV…TGLL.

It belongs to the CobS family. Mg(2+) serves as cofactor.

The protein localises to the cell inner membrane. It catalyses the reaction alpha-ribazole + adenosylcob(III)inamide-GDP = adenosylcob(III)alamin + GMP + H(+). The catalysed reaction is alpha-ribazole 5'-phosphate + adenosylcob(III)inamide-GDP = adenosylcob(III)alamin 5'-phosphate + GMP + H(+). Its pathway is cofactor biosynthesis; adenosylcobalamin biosynthesis; adenosylcobalamin from cob(II)yrinate a,c-diamide: step 7/7. Joins adenosylcobinamide-GDP and alpha-ribazole to generate adenosylcobalamin (Ado-cobalamin). Also synthesizes adenosylcobalamin 5'-phosphate from adenosylcobinamide-GDP and alpha-ribazole 5'-phosphate. The polypeptide is Adenosylcobinamide-GDP ribazoletransferase (Stutzerimonas stutzeri (strain A1501) (Pseudomonas stutzeri)).